A 273-amino-acid polypeptide reads, in one-letter code: 4-hydroxy-tetrahydrodipicolinate reductase (273 aa).

NAD(+) contacts are provided by residues 12–17 and E38; that span reads GAGGRM. An NADP(+)-binding site is contributed by R39. NAD(+) contacts are provided by residues 102 to 104 and 126 to 129; these read GTT and AANF. Catalysis depends on H159, which acts as the Proton donor/acceptor. Residue H160 coordinates (S)-2,3,4,5-tetrahydrodipicolinate. Residue K163 is the Proton donor of the active site. Residue 169-170 participates in (S)-2,3,4,5-tetrahydrodipicolinate binding; the sequence is GT.

This sequence belongs to the DapB family. In terms of assembly, homotetramer.

It localises to the cytoplasm. The catalysed reaction is (S)-2,3,4,5-tetrahydrodipicolinate + NAD(+) + H2O = (2S,4S)-4-hydroxy-2,3,4,5-tetrahydrodipicolinate + NADH + H(+). It carries out the reaction (S)-2,3,4,5-tetrahydrodipicolinate + NADP(+) + H2O = (2S,4S)-4-hydroxy-2,3,4,5-tetrahydrodipicolinate + NADPH + H(+). It participates in amino-acid biosynthesis; L-lysine biosynthesis via DAP pathway; (S)-tetrahydrodipicolinate from L-aspartate: step 4/4. Its function is as follows. Catalyzes the conversion of 4-hydroxy-tetrahydrodipicolinate (HTPA) to tetrahydrodipicolinate. This is 4-hydroxy-tetrahydrodipicolinate reductase from Escherichia coli O139:H28 (strain E24377A / ETEC).